Here is a 928-residue protein sequence, read N- to C-terminus: RhoGEF domain-containing protein gxcH (928 aa).

Positions 30-48 are enriched in low complexity; sequence SKSFDNNNNNNSNTNNIKN. Disordered stretches follow at residues 30–76, 90–201, and 318–410; these read SKSF…PPVP, ITNY…PPLG, and DNGV…NKDT. Polar residues predominate over residues 93–103; sequence YIPTTPPSINI. Residues 112-123 show a composition bias toward acidic residues; that stretch reads DNYDDNYDDNYS. Polar residues-rich tracts occupy residues 129-141, 175-187, and 334-367; these read TSTT…SPEF, ETFN…EGLQ, and KSGT…NLRG. Low complexity predominate over residues 377–407; it reads NQTTNKNNSNNNNNNTTTNNNNNNNNNNNNN. The DH domain occupies 484–671; it reads IFNKVVKEII…GKIVSDINGK (188 aa). Residues 699-807 form a PH-like region; it reads FIGEGKVKKV…NKIEDQIVSE (109 aa). The tract at residues 835-928 is disordered; the sequence is SDSQSDFVDH…NTEPENFSFY (94 aa). Over residues 848–857 the composition is skewed to low complexity; it reads QEQQEQQQQQ.

In terms of biological role, GTPase-activating protein. This Dictyostelium discoideum (Social amoeba) protein is RhoGEF domain-containing protein gxcH (gxcH).